A 330-amino-acid chain; its full sequence is Methionyl-tRNA formyltransferase (330 aa).

Position 117–120 (117–120) interacts with (6S)-5,6,7,8-tetrahydrofolate; it reads SLLP.

It belongs to the Fmt family.

The enzyme catalyses L-methionyl-tRNA(fMet) + (6R)-10-formyltetrahydrofolate = N-formyl-L-methionyl-tRNA(fMet) + (6S)-5,6,7,8-tetrahydrofolate + H(+). Its function is as follows. Attaches a formyl group to the free amino group of methionyl-tRNA(fMet). The formyl group appears to play a dual role in the initiator identity of N-formylmethionyl-tRNA by promoting its recognition by IF2 and preventing the misappropriation of this tRNA by the elongation apparatus. This chain is Methionyl-tRNA formyltransferase, found in Verminephrobacter eiseniae (strain EF01-2).